Consider the following 247-residue polypeptide: Serine protease 1 (247 aa).

The signal sequence occupies residues methionine 1–alanine 15. The propeptide at alanine 16 to lysine 23 is activation peptide. Positions isoleucine 24 to alanine 244 constitute a Peptidase S1 domain. 5 disulfides stabilise this stretch: cysteine 30–cysteine 160, cysteine 48–cysteine 64, cysteine 139–cysteine 206, cysteine 171–cysteine 185, and cysteine 196–cysteine 220. Histidine 63 (charge relay system) is an active-site residue. Ca(2+) is bound by residues glutamate 75, asparagine 77, valine 80, and glutamate 85. Aspartate 107 serves as the catalytic Charge relay system. At tyrosine 154 the chain carries Sulfotyrosine. Serine 200 functions as the Charge relay system in the catalytic mechanism.

Belongs to the peptidase S1 family. In terms of assembly, interacts with SERPINA1. Requires Ca(2+) as cofactor. Post-translationally, occurs in a single-chain form and a two-chain form, produced by proteolytic cleavage after Arg-122. Sulfation at Tyr-154 increases selectivity towards basic versus apolar residues at the P2' position of inhibitors that bind in a substrate-like fashion. Although the increase in selectivity is relatively small, it may facilitate digestion of a broader range of dietary proteins.

It is found in the secreted. The protein localises to the extracellular space. The catalysed reaction is Preferential cleavage: Arg-|-Xaa, Lys-|-Xaa.. Its function is as follows. Has activity against the synthetic substrates Boc-Phe-Ser-Arg-Mec, Boc-Leu-Thr-Arg-Mec, Boc-Gln-Ala-Arg-Mec and Boc-Val-Pro-Arg-Mec. The single-chain form is more active than the two-chain form against all of these substrates. The sequence is that of Serine protease 1 from Homo sapiens (Human).